A 294-amino-acid polypeptide reads, in one-letter code: ATP synthase gamma chain (294 aa).

The protein belongs to the ATPase gamma chain family. As to quaternary structure, F-type ATPases have 2 components, CF(1) - the catalytic core - and CF(0) - the membrane proton channel. CF(1) has five subunits: alpha(3), beta(3), gamma(1), delta(1), epsilon(1). CF(0) has three main subunits: a, b and c.

Its subcellular location is the cell inner membrane. Produces ATP from ADP in the presence of a proton gradient across the membrane. The gamma chain is believed to be important in regulating ATPase activity and the flow of protons through the CF(0) complex. The chain is ATP synthase gamma chain from Campylobacter jejuni subsp. jejuni serotype O:2 (strain ATCC 700819 / NCTC 11168).